A 320-amino-acid polypeptide reads, in one-letter code: Nuclease (320 aa).

Residue His-155 is the Proton acceptor of the active site. Asn-187 provides a ligand contact to Mg(2+). Residue Asn-204 is glycosylated (N-linked (GlcNAc...) asparagine). Cys-312 and Cys-317 are joined by a disulfide.

Belongs to the DNA/RNA non-specific endonuclease family. In terms of assembly, homodimer; as a result of non-covalent interactions and not through the disulfide linkages between the two monomers. The cofactor is Mg(2+). Mn(2+) is required as a cofactor. In terms of processing, glycosylated.

It is found in the secreted. Its function is as follows. This enzyme has both RNase and DNase activity. In Syncephalastrum racemosum (Filamentous fungus), this protein is Nuclease.